Consider the following 223-residue polypeptide: MSETAPAETAAPAPVEKSPAKKKTTKKAGAAKRKATGPPVSELITKAVSASKERGGVSLPALKKALAAGGYDVEKNNSRIKLGLKSLVSKGTLVQTKGTGASGSFKLNKKAASGEAKPKAKKTGAAKAKKPAGATPKKPKKTAGAKKTVKKTPKKAKKPAAAGVKKVAKSPKKAKAAAKPKKAAKSPAKPKAVKSKASKPKVTKPKTAKPKAAKAKKAVSKKK.

Over residues 1–14 (MSETAPAETAAPAP) the composition is skewed to low complexity. The segment at 1-56 (MSETAPAETAAPAPVEKSPAKKKTTKKAGAAKRKATGPPVSELITKAVSASKERGG) is disordered. Position 2 is an N-acetylserine (Ser-2). Ser-2 bears the Phosphoserine mark. An N6-acetyllysine modification is found at Lys-17. A Phosphoserine modification is found at Ser-18. The segment covering 20 to 35 (AKKKTTKKAGAAKRKA) has biased composition (basic residues). Lys-27 is modified (N6-methyllysine). Lys-34 bears the N6-(beta-hydroxybutyryl)lysine; alternate mark. Position 34 is an N6-succinyllysine; alternate (Lys-34). Thr-36 bears the Phosphothreonine mark. An H15 domain is found at 36–109 (TGPPVSELIT…GASGSFKLNK (74 aa)). An N6-acetyllysine modification is found at Lys-46. Residue Lys-52 is modified to N6-(beta-hydroxybutyryl)lysine. Citrulline is present on Arg-54. Position 64 is an N6-(beta-hydroxybutyryl)lysine (Lys-64). Lys-75 is subject to N6-acetyllysine. 3 positions are modified to N6-(beta-hydroxybutyryl)lysine: Lys-85, Lys-90, and Lys-106. Positions 91-223 (GTLVQTKGTG…KAKKAVSKKK (133 aa)) are disordered. Residues 119–130 (KAKKTGAAKAKK) show a composition bias toward basic residues. 2 positions are modified to phosphothreonine: Thr-135 and Thr-152. The span at 137-158 (KKPKKTAGAKKTVKKTPKKAKK) shows a compositional bias: basic residues. Lys-165 carries the post-translational modification N6-acetyllysine. A compositionally biased stretch (basic residues) spans 166 to 184 (KVAKSPKKAKAAAKPKKAA). Phosphoserine is present on residues Ser-170 and Ser-186. Residues 191-223 (KAVKSKASKPKVTKPKTAKPKAAKAKKAVSKKK) are compositionally biased toward basic residues.

The protein belongs to the histone H1/H5 family. As to quaternary structure, interacts with MSX1. H1 histones are progressively phosphorylated during the cell cycle, becoming maximally phosphorylated during late G2 phase and M phase, and being dephosphorylated sharply thereafter. Post-translationally, citrullination at Arg-54 (H1R54ci) by PADI4 takes place within the DNA-binding site of H1 and results in its displacement from chromatin and global chromatin decondensation, thereby promoting pluripotency and stem cell maintenance. In terms of processing, hydroxybutyrylation of histones is induced by starvation.

It localises to the nucleus. The protein localises to the chromosome. Its function is as follows. Histone H1 protein binds to linker DNA between nucleosomes forming the macromolecular structure known as the chromatin fiber. Histones H1 are necessary for the condensation of nucleosome chains into higher-order structured fibers. Also acts as a regulator of individual gene transcription through chromatin remodeling, nucleosome spacing and DNA methylation. This chain is Histone H1.5 (H1-5), found in Mus musculus (Mouse).